A 635-amino-acid polypeptide reads, in one-letter code: MIHVTCNQEAFELPEGASAMDLANKMKQSHCFAGALINDQEKDLSTTLQDGDTVLFLTWDDPKGREIFLHTSAHILAQAVLRLWPSAQPTIGPVIDQGFYYDFANLSISEEDFPAIEAMAKTIAEEKFPISRQVFPDKEAALAYFSQNPFKAELIAELPEEVEISAYTQGEFLDLCRGPHLPSTAPVKAFKLLRTSSAYWKGDPSRESLIRIYGVSFPTTKELKEHLHQLEEAKKRDHRVLGTKLDLFSQQTCSAGMPFFHPRGMVVWNALVDYWKRLHQRAGYQQIQTPQLMNRELWEISGHWENYKENMYTLTVDEEDYAIKPMNCPGCMLYYKTQLHSYREFPLRIAEIGHVHRHELSGALSGLMRVRTFHQDDAHVFLTPEQVEEETLNILNLVSELYGTFGLEYHLELSTRPEQGTIGSDDLWELATKALKRALVKSQKPFIISPGEGAFYGPKIDIHVKDAINRTWQCGTIQLDMFLPERFDLKYTNAQGEKSTPIMLHRALFGSIERFLGILIEHFKGRFPLWLSPEHVRIITVADRHEARAQELAKHFSQMGIIVSVDSSNESVSKKIRNAQNMQVNYMITIGDKELETHLLAVRTRDNRVLNDIAVEQFSHVILEELRSLSLTPSL.

Positions Met1–Thr58 constitute a TGS domain. The tract at residues Asp237 to Pro528 is catalytic. Residues Cys328, His379, and His505 each contribute to the Zn(2+) site.

Belongs to the class-II aminoacyl-tRNA synthetase family. Homodimer. Requires Zn(2+) as cofactor.

It is found in the cytoplasm. It carries out the reaction tRNA(Thr) + L-threonine + ATP = L-threonyl-tRNA(Thr) + AMP + diphosphate + H(+). Functionally, catalyzes the attachment of threonine to tRNA(Thr) in a two-step reaction: L-threonine is first activated by ATP to form Thr-AMP and then transferred to the acceptor end of tRNA(Thr). Also edits incorrectly charged L-seryl-tRNA(Thr). In Chlamydia trachomatis serovar A (strain ATCC VR-571B / DSM 19440 / HAR-13), this protein is Threonine--tRNA ligase.